The following is a 321-amino-acid chain: NADPH-dependent codeinone reductase 1-4 (321 aa).

NADPH is bound by residues threonine 27 and aspartate 51. Residues tyrosine 56 and histidine 119 each act as proton donor in the active site. A substrate-binding site is contributed by histidine 119. 6 residues coordinate NADPH: serine 165, glutamine 187, serine 214, leucine 216, serine 264, and arginine 269. Positions 299 to 321 are disordered; it reads SADFLLSPTGPFKTEEEFWDEKD.

It belongs to the aldo/keto reductase family. As to expression, latex secreting cells (laticifer cells). Expressed constitutively in all organs with highest levels in capsules. Restricted to the parietal region of sieve elements adjacent or proximal to laticifers in roots, stems, leaves and carpels.

The protein resides in the cytoplasm. Its subcellular location is the cytosol. It carries out the reaction codeine + NADP(+) = codeinone + NADPH + H(+). It catalyses the reaction neopine + NADP(+) = neopinone + NADPH + H(+). The catalysed reaction is morphine + NADP(+) = morphinone + NADPH + H(+). The enzyme catalyses neomorphine + NADP(+) = neomorphinone + NADPH + H(+). The protein operates within alkaloid biosynthesis; morphine biosynthesis. NADPH-dependent codeinone reductase involved in biosynthesis of morphinan-type benzylisoquinoline and opiate alkaloids natural products. Reduces codeinone to codeine in the penultimate step in morphine biosynthesis. Can use morphinone, hydrocodone and hydromorphone as substrate during reductive reaction with NADPH as cofactor, and morphine and dihydrocodeine as substrate during oxidative reaction with NADP as cofactor. Converts morphinone to morphine, and neomorphinone to neomorphine. Reduces irreversibly neopinone, a spontaneous isomer of codeinone, to neopine; in planta, neopine levels are limited to low levels. This chain is NADPH-dependent codeinone reductase 1-4, found in Papaver somniferum (Opium poppy).